Consider the following 292-residue polypeptide: Small ribosomal subunit protein uS2 (292 aa).

Positions 230 to 292 (RSGGAPGSEK…KKEAGSGEEA (63 aa)) are disordered. Composition is skewed to basic and acidic residues over residues 247–259 (EWERELLEGKTEA) and 271–292 (PAKEEKAQAPEEKKEAGSGEEA).

The protein belongs to the universal ribosomal protein uS2 family.

The protein is Small ribosomal subunit protein uS2 of Thermobifida fusca (strain YX).